An 89-amino-acid chain; its full sequence is Small ribosomal subunit protein uS15c (89 aa).

The protein belongs to the universal ribosomal protein uS15 family. As to quaternary structure, part of the 30S ribosomal subunit.

The protein resides in the plastid. The chain is Small ribosomal subunit protein uS15c (rps15) from Aneura mirabilis (Parasitic liverwort).